We begin with the raw amino-acid sequence, 200 residues long: Small ribosomal subunit protein uS4 (200 aa).

The segment at 22 to 41 (TGKEIEKRPYAPGQHGPNQR) is disordered. Residues 92 to 152 (TRLDNLVYRL…EKSQNLAVVG (61 aa)) enclose the S4 RNA-binding domain.

It belongs to the universal ribosomal protein uS4 family. As to quaternary structure, part of the 30S ribosomal subunit. Contacts protein S5. The interaction surface between S4 and S5 is involved in control of translational fidelity.

One of the primary rRNA binding proteins, it binds directly to 16S rRNA where it nucleates assembly of the body of the 30S subunit. In terms of biological role, with S5 and S12 plays an important role in translational accuracy. The protein is Small ribosomal subunit protein uS4 of Lysinibacillus sphaericus (strain C3-41).